The following is a 292-amino-acid chain: Elongation factor Ts (292 aa).

The tract at residues 79–82 (TDFV) is involved in Mg(2+) ion dislocation from EF-Tu.

Belongs to the EF-Ts family.

It is found in the cytoplasm. In terms of biological role, associates with the EF-Tu.GDP complex and induces the exchange of GDP to GTP. It remains bound to the aminoacyl-tRNA.EF-Tu.GTP complex up to the GTP hydrolysis stage on the ribosome. In Xanthomonas euvesicatoria pv. vesicatoria (strain 85-10) (Xanthomonas campestris pv. vesicatoria), this protein is Elongation factor Ts.